The following is a 49-amino-acid chain: Feruloyl esterase A (49 aa).

Belongs to the AB hydrolase superfamily. FaeA family.

Its subcellular location is the secreted. The enzyme catalyses feruloyl-polysaccharide + H2O = ferulate + polysaccharide.. Involved in degradation of plant cell walls. Hydrolyzes the feruloyl-arabinose ester bond in arabinoxylans as well as the feruloyl-galactose and feruloyl-arabinose ester bonds in pectin. Active against methyl esters of sinapate (MSA), but not caffeate (MCA). The polypeptide is Feruloyl esterase A (Talaromyces stipitatus (strain ATCC 10500 / CBS 375.48 / QM 6759 / NRRL 1006) (Penicillium stipitatum)).